A 129-amino-acid chain; its full sequence is Small ribosomal subunit protein uS8 (129 aa).

It belongs to the universal ribosomal protein uS8 family. Part of the 30S ribosomal subunit. Contacts proteins S5 and S12.

Its function is as follows. One of the primary rRNA binding proteins, it binds directly to 16S rRNA central domain where it helps coordinate assembly of the platform of the 30S subunit. The sequence is that of Small ribosomal subunit protein uS8 from Bdellovibrio bacteriovorus (strain ATCC 15356 / DSM 50701 / NCIMB 9529 / HD100).